The chain runs to 223 residues: Putative UPF0607 protein LOC392364 (223 aa).

The span at 110 to 138 (KMEVRAEEPKEATEVKDQVETQEQEDNKR) shows a compositional bias: basic and acidic residues. A disordered region spans residues 110 to 223 (KMEVRAEEPK…GRTPPARQHG (114 aa)). Polar residues-rich tracts occupy residues 145 to 163 (EAAS…TSPR) and 174 to 186 (QLKS…QTDK).

It belongs to the UPF0607 family.

This chain is Putative UPF0607 protein LOC392364, found in Homo sapiens (Human).